Consider the following 284-residue polypeptide: MVRYSKLAFRQLVRVYDVDVCFTPMIYAKNFIESEKCRSSELSVCEGDSPLIVQFATDDPFVLSEAAEMVYKCSTGVDLNCGCPKHDVRSKGFGSALLSKPELLADMVRQTRARIPDPDFSVSLKIRINHDIEKTVDLCRKAEAAGVTHLTVHGRTPSQRAEPIDIQALRIVKDSVSVPIIANGGITTREEALFLAEQTGVDGIMAANGLLDNPALFAGHEHTPSDCVENFMRLSREYGLDWLLYHQHLQYMLRPVFSAQQRRVFNELNGRLAIDHFLNNLLDI.

Residue Q54 participates in FMN binding. The active-site Proton donor is the C83. Residues K125, H153, 183–185 (NGG), and 207–208 (AN) contribute to the FMN site.

This sequence belongs to the Dus family. Requires FMN as cofactor.

Catalyzes the synthesis of dihydrouridine, a modified base found in the D-loop of most tRNAs. This is an uncharacterized protein from Caenorhabditis elegans.